A 623-amino-acid polypeptide reads, in one-letter code: Chaperone protein dnaK (623 aa).

A disordered region spans residues 598–623; sequence TPDAGAEGGAAPSQDDAIETDFSTEK.

The protein belongs to the heat shock protein 70 family.

Its subcellular location is the plastid. The protein resides in the chloroplast. In terms of biological role, acts as a chaperone. In Emiliania huxleyi (Coccolithophore), this protein is Chaperone protein dnaK.